We begin with the raw amino-acid sequence, 143 residues long: uncharacterized protein (143 aa).

This is an uncharacterized protein from Saccharomyces cerevisiae (strain ATCC 204508 / S288c) (Baker's yeast).